A 246-amino-acid polypeptide reads, in one-letter code: 1-(5-phosphoribosyl)-5-[(5-phosphoribosylamino)methylideneamino] imidazole-4-carboxamide isomerase (246 aa).

Asp7 serves as the catalytic Proton acceptor. Asp130 acts as the Proton donor in catalysis.

It belongs to the HisA/HisF family.

It localises to the cytoplasm. The enzyme catalyses 1-(5-phospho-beta-D-ribosyl)-5-[(5-phospho-beta-D-ribosylamino)methylideneamino]imidazole-4-carboxamide = 5-[(5-phospho-1-deoxy-D-ribulos-1-ylimino)methylamino]-1-(5-phospho-beta-D-ribosyl)imidazole-4-carboxamide. Its pathway is amino-acid biosynthesis; L-histidine biosynthesis; L-histidine from 5-phospho-alpha-D-ribose 1-diphosphate: step 4/9. The protein is 1-(5-phosphoribosyl)-5-[(5-phosphoribosylamino)methylideneamino] imidazole-4-carboxamide isomerase of Blochmanniella pennsylvanica (strain BPEN).